The following is a 397-amino-acid chain: Cercosporin biosynthesis regulatory protein CTB8 (397 aa).

Positions 26–53 form a DNA-binding region, zn(2)-C6 fungal-type; it reads CTHCSSQKIRCTKERPACARCVNKGLLC. Disordered stretches follow at residues 63–90 and 173–198; these read TRRHSVRATPEPETTISNAPTSSVAPDS and AEASTRPSSSSSPPSQRSDGGRATTH. Residues 74–87 show a composition bias toward polar residues; the sequence is PETTISNAPTSSVA. Low complexity predominate over residues 179–197; that stretch reads PSSSSSPPSQRSDGGRATT.

The protein resides in the nucleus. Its function is as follows. Transcription regulator of the gene cluster that mediates the biosynthesis of cercosporin, a light-activated, non-host-selective toxin. The perylenequinone chromophore of cercosporin absorbs light energy to attain an electronically-activated triplet state and produces active oxygen species such as the hydroxyl radical, superoxide, hydrogen peroxide or singlet oxygen upon reaction with oxygen molecules. These reactive oxygen species cause damage to various cellular components including lipids, proteins and nucleic acids. This is Cercosporin biosynthesis regulatory protein CTB8 from Cercospora beticola (Sugarbeet leaf spot fungus).